The sequence spans 452 residues: MTDYRTLFSSPGAGSTVTTPITLSLLLLLSQATSDPCYDPGGRPRFCLPPVTQLVGKAAAPCSQTCALPAASPGPACNSSLTLDLDGSFLLTSVTLRFCTAGPPALVLSAAWATGGPWRPLWRRPAWPGALGGPKKVTFHSPPGPKTRIVASYLRVEFGGKAGLVTTGVRGRCQCHGHAARCATRAQPPRCRCRHHTTGPGCESCRPSHRDWPWRPATPQHPHPCLPCQCHPIGATGGMCNQTSGQCSCKLGVTGLTCNRCGPGYQQSRSPRMPCQRIPEATTTPATTPVASRSDPQCQGYCNVSVSSVHMSLQRYCQQDYVLHAQVSASSSQPSEAVGPEWWRLAVHVLAVFKQRAWPVRRGGQEAWVPRADLICGCLRLRPGADYLLLGRAAQTHDDDNYDPARLILNRHGLALPWRPRWARPLRRLQQKERGGACRGLLPPTRSPGPRN.

The first 34 residues, 1 to 34 (MTDYRTLFSSPGAGSTVTTPITLSLLLLLSQATS), serve as a signal peptide directing secretion. Disulfide bonds link Cys173-Cys182, Cys175-Cys191, Cys193-Cys202, Cys205-Cys225, Cys228-Cys240, Cys230-Cys247, Cys249-Cys258, Cys261-Cys275, Cys298-Cys376, Cys302-Cys378, and Cys317-Cys438. 2 consecutive Laminin EGF-like domains span residues 173-227 (CQCH…PCLP) and 228-277 (CQCH…PCQR). In terms of domain architecture, NTR spans 298–438 (CQGYCNVSVS…LQQKERGGAC (141 aa)). Residue Asn303 is glycosylated (N-linked (GlcNAc...) asparagine).

Its subcellular location is the secreted. Functionally, plays a role in neurogenesis. Prevents motor neuron cell body migration out of the neural tube. The polypeptide is Netrin-5 (Ntn5) (Mus musculus (Mouse)).